Here is a 122-residue protein sequence, read N- to C-terminus: Large ribosomal subunit protein uL14 (122 aa).

The protein belongs to the universal ribosomal protein uL14 family. In terms of assembly, part of the 50S ribosomal subunit. Forms a cluster with proteins L3 and L19. In the 70S ribosome, L14 and L19 interact and together make contacts with the 16S rRNA in bridges B5 and B8.

Functionally, binds to 23S rRNA. Forms part of two intersubunit bridges in the 70S ribosome. This chain is Large ribosomal subunit protein uL14, found in Prosthecochloris aestuarii (strain DSM 271 / SK 413).